Here is a 571-residue protein sequence, read N- to C-terminus: Urease subunit alpha (571 aa).

One can recognise a Urease domain in the interval 133 to 571; it reads AGIDTHIHFI…VALNQRYFFS (439 aa). 3 residues coordinate Ni(2+): H138, H140, and K221. K221 is subject to N6-carboxylysine. Position 223 (H223) interacts with substrate. Positions 250 and 276 each coordinate Ni(2+). H324 functions as the Proton donor in the catalytic mechanism. Position 364 (D364) interacts with Ni(2+).

Belongs to the metallo-dependent hydrolases superfamily. Urease alpha subunit family. As to quaternary structure, heterotrimer of UreA (gamma), UreB (beta) and UreC (alpha) subunits. Three heterotrimers associate to form the active enzyme. Ni cation is required as a cofactor. Post-translationally, carboxylation allows a single lysine to coordinate two nickel ions.

The protein localises to the cytoplasm. It catalyses the reaction urea + 2 H2O + H(+) = hydrogencarbonate + 2 NH4(+). It functions in the pathway nitrogen metabolism; urea degradation; CO(2) and NH(3) from urea (urease route): step 1/1. The chain is Urease subunit alpha from Photorhabdus laumondii subsp. laumondii (strain DSM 15139 / CIP 105565 / TT01) (Photorhabdus luminescens subsp. laumondii).